The following is a 198-amino-acid chain: dTTP/UTP pyrophosphatase (198 aa).

D78 (proton acceptor) is an active-site residue.

This sequence belongs to the Maf family. YhdE subfamily. The cofactor is a divalent metal cation.

The protein resides in the cytoplasm. The catalysed reaction is dTTP + H2O = dTMP + diphosphate + H(+). The enzyme catalyses UTP + H2O = UMP + diphosphate + H(+). Nucleoside triphosphate pyrophosphatase that hydrolyzes dTTP and UTP. May have a dual role in cell division arrest and in preventing the incorporation of modified nucleotides into cellular nucleic acids. This chain is dTTP/UTP pyrophosphatase, found in Chromobacterium violaceum (strain ATCC 12472 / DSM 30191 / JCM 1249 / CCUG 213 / NBRC 12614 / NCIMB 9131 / NCTC 9757 / MK).